The chain runs to 243 residues: Orotidine 5'-phosphate decarboxylase (243 aa).

Residues aspartate 12, lysine 34, 61–70, threonine 125, arginine 187, glutamine 196, glycine 216, and arginine 217 contribute to the substrate site; that span reads DLKFHDIPNT. Lysine 63 acts as the Proton donor in catalysis.

This sequence belongs to the OMP decarboxylase family. Type 1 subfamily. In terms of assembly, homodimer.

The catalysed reaction is orotidine 5'-phosphate + H(+) = UMP + CO2. Its pathway is pyrimidine metabolism; UMP biosynthesis via de novo pathway; UMP from orotate: step 2/2. Its function is as follows. Catalyzes the decarboxylation of orotidine 5'-monophosphate (OMP) to uridine 5'-monophosphate (UMP). The sequence is that of Orotidine 5'-phosphate decarboxylase from Heliobacterium modesticaldum (strain ATCC 51547 / Ice1).